The primary structure comprises 159 residues: uncharacterized protein (159 aa).

The interval 1–139 (MSRRAPGSRL…RKSQERSMSY (139 aa)) is disordered. Polar residues predominate over residues 9-31 (RLSSGGTNYSRSWNDWQPRTDSA). The segment covering 65 to 82 (QRHDDTRVHADIQNDEKG) has biased composition (basic and acidic residues). The span at 105-119 (RVNNVTSPEFTSVQH) shows a compositional bias: polar residues. The segment covering 125-134 (ATKDMRKSQE) has biased composition (basic and acidic residues).

This is an uncharacterized protein from Homo sapiens (Human).